The following is a 343-amino-acid chain: MSFSPQEALQRTIEHREIFFDEMVDLMRQIMRGDVSPMMTAAILTGLRVKKETIDEIAAAATVMREFALAVPVADSTHLVDIVGTGGDGSHTFNISTCAMFVAAAAGARVAKHGNRSVSSKSGSADAVEALGAAIELQPAQVAAAIEQTGIGFMFAPIHHPSMKVVAPVRREMGVRTIFNILGPLTNPASAPSVLMGVFHPDLVGIQARVLRELGTERAMVVWGRDNMDEISLGAGTLVGELRDGKVREYEIHPEDFGIAMSASRNLRVDGPEQSIAMLRAVLDNTPGPALDIVALNAGAALYVAGVASDIGDGLARARAAIANGSARQRLQQYVDTTRTLVA.

5-phospho-alpha-D-ribose 1-diphosphate is bound by residues glycine 84, 87–88 (GD), threonine 92, 94–97 (NIST), 112–120 (KHGNRSVSS), and serine 124. Glycine 84 contributes to the anthranilate binding site. Serine 96 contributes to the Mg(2+) binding site. Asparagine 115 contacts anthranilate. Arginine 170 provides a ligand contact to anthranilate. The Mg(2+) site is built by aspartate 229 and glutamate 230.

The protein belongs to the anthranilate phosphoribosyltransferase family. Homodimer. Mg(2+) serves as cofactor.

It catalyses the reaction N-(5-phospho-beta-D-ribosyl)anthranilate + diphosphate = 5-phospho-alpha-D-ribose 1-diphosphate + anthranilate. It participates in amino-acid biosynthesis; L-tryptophan biosynthesis; L-tryptophan from chorismate: step 2/5. Functionally, catalyzes the transfer of the phosphoribosyl group of 5-phosphorylribose-1-pyrophosphate (PRPP) to anthranilate to yield N-(5'-phosphoribosyl)-anthranilate (PRA). In Stenotrophomonas maltophilia (strain R551-3), this protein is Anthranilate phosphoribosyltransferase.